Consider the following 206-residue polypeptide: LexA repressor (206 aa).

Residues 28–48 (RAEIARELGFRSANAAEEHLK) constitute a DNA-binding region (H-T-H motif). Catalysis depends on for autocatalytic cleavage activity residues Ser123 and Lys160.

It belongs to the peptidase S24 family. As to quaternary structure, homodimer.

It catalyses the reaction Hydrolysis of Ala-|-Gly bond in repressor LexA.. Functionally, represses a number of genes involved in the response to DNA damage (SOS response), including recA and lexA. In the presence of single-stranded DNA, RecA interacts with LexA causing an autocatalytic cleavage which disrupts the DNA-binding part of LexA, leading to derepression of the SOS regulon and eventually DNA repair. The polypeptide is LexA repressor (Vibrio campbellii (strain ATCC BAA-1116)).